A 324-amino-acid polypeptide reads, in one-letter code: METQLLRFPSHTITSSITTNSSRNTTPFLPHKKWSHFVKFQLVNSSSSIKHGIRPLQASATSLGLGNKNRVDETESYTLDGIRHSLIRQEDSIIFSLVERAQYCYNAETYDPDVFAMDGFHGSLVEYIVRETEKLHATVGRYKSPDEHPFFPKVLPEPVLPPMQYPKVLHPIADSININVKIWEMYFENLLPRLVKEGDDGNYGSTAVCDTICVQALSKRIHYGKFVAEAKYRASPEVYNAAIRAQDRNGLMDLLTYPAVEEAIKRRVEIKTRTYGQELHINGPENGGDPVYKIKPSLVAELYGDWIMPLTKEVQVQYLLRRLD.

A chloroplast-targeting transit peptide spans 1–56; that stretch reads METQLLRFPSHTITSSITTNSSRNTTPFLPHKKWSHFVKFQLVNSSSSIKHGIRPL. Residue arginine 70 coordinates L-phenylalanine. The Chorismate mutase domain maps to 70–324; sequence RVDETESYTL…QVQYLLRRLD (255 aa). L-tyrosine contacts are provided by residues arginine 141 and 202 to 205; that span reads NYGS. 202 to 205 is an L-phenylalanine binding site; it reads NYGS.

As to quaternary structure, homodimer. In terms of tissue distribution, mostly expressed in petal tubes and petal limbs, and, to a lower extent, in stigmas, anthers, sepals, roots, stems and leaves.

The protein resides in the plastid. Its subcellular location is the chloroplast stroma. It catalyses the reaction chorismate = prephenate. The protein operates within metabolic intermediate biosynthesis; prephenate biosynthesis; prephenate from chorismate: step 1/1. With respect to regulation, allosterically activated by tryptophan but not by tyrosine and phenylalanine. In terms of biological role, component of the floral volatile benzenoid/phenylpropanoid (FVBPs) biosynthetic pathway. Mediates the conversion of chorismate to prephenate, thus coupling metabolites from the shikimate pathway to the synthesis of FVBPs in the corolla. The chain is Chorismate mutase 1, chloroplastic from Petunia hybrida (Petunia).